A 213-amino-acid chain; its full sequence is Protein Tpen_0748 (213 aa).

One can recognise an AMMECR1 domain in the interval 7-207 (EEGALLVRLA…ETTPKGDVVE (201 aa)).

The protein is Protein Tpen_0748 of Thermofilum pendens (strain DSM 2475 / Hrk 5).